The chain runs to 563 residues: (R)-mandelonitrile lyase 1 (563 aa).

The first 27 residues, 1–27, serve as a signal peptide directing secretion; that stretch reads MEKSTMSAILLVLHLFVLLLQYSEVHS. FAD contacts are provided by residues 63–64, 82–83, Val129, Thr133, and 137–140; these read TS, ER, and NAGV. 2 N-linked (GlcNAc...) asparagine glycosylation sites follow: Asn145 and Asn162. Position 244 (Val244) interacts with FAD. Residue Cys355 coordinates substrate. Residue Asn379 is glycosylated (N-linked (GlcNAc...) asparagine). A disulfide bridge connects residues Cys426 and Cys477. Tyr484 is a substrate binding site. FAD is bound by residues 485-486 and Gly514; that span reads WH. Residue His486 is the Proton donor of the active site. Catalysis depends on His524, which acts as the Proton acceptor. 525 to 526 lines the FAD pocket; the sequence is PQ.

This sequence belongs to the GMC oxidoreductase family. As to quaternary structure, monomer. It depends on FAD as a cofactor. Glycosylated. Seeds. Localized within cotyledonary parenchyma cells.

The protein resides in the vacuole. Its subcellular location is the aleurone grain. It carries out the reaction (R)-mandelonitrile = benzaldehyde + hydrogen cyanide. Involved in cyanogenesis, the release of HCN from injured tissues. Catalyzes the stereospecific addition of HCN to a variety of aldehydes in vitro. It is a major seed constituent, and could have the additional role of a storage form for reduced nitrogen. The sequence is that of (R)-mandelonitrile lyase 1 (MDL1) from Prunus serotina (Black cherry).